The following is a 316-amino-acid chain: MKTIHITHPHHLIKEEQAKSVMALGYFDGVHLGHQKVIGTAKQIAEEKGLTLAVMTFHPHPSHVLGRDKEPKDLITPLEDKINQIEQLGTEVLYVVKFNEVFASLSPKQFIDQYIIGLNVQHAVAGFDFTYGKYGKGTMKTMPDDLDGKAGCTMVEKLTEQDKKISSSYIRTALQNGDVELANVLLGQPYFIKGIVIHGDKRGRTIGFPTANVGLNNSYIVPPTGVYAVKAEVNGEVYNGVCNIGYKPTFYEKRPEQPSIEVNLFDFNQEVYGAAIKIEWYKRIRSERKFNGIKELTEQIEKDKQEAIRYFSNLRK.

Belongs to the RibF family.

It carries out the reaction riboflavin + ATP = FMN + ADP + H(+). The enzyme catalyses FMN + ATP + H(+) = FAD + diphosphate. It participates in cofactor biosynthesis; FAD biosynthesis; FAD from FMN: step 1/1. The protein operates within cofactor biosynthesis; FMN biosynthesis; FMN from riboflavin (ATP route): step 1/1. Functionally, catalyzes the phosphorylation of riboflavin to FMN followed by the adenylation of FMN to FAD. This is Bifunctional riboflavin kinase/FMN adenylyltransferase (ribC) from Bacillus subtilis (strain 168).